The sequence spans 331 residues: UDP-N-acetylenolpyruvoylglucosamine reductase (331 aa).

The FAD-binding PCMH-type domain maps to 54 to 221 (RVGGAAELYV…TQATFQLQPG (168 aa)). Arginine 200 is a catalytic residue. The active-site Proton donor is serine 251. Glutamate 321 is an active-site residue.

The protein belongs to the MurB family. It depends on FAD as a cofactor.

Its subcellular location is the cytoplasm. It catalyses the reaction UDP-N-acetyl-alpha-D-muramate + NADP(+) = UDP-N-acetyl-3-O-(1-carboxyvinyl)-alpha-D-glucosamine + NADPH + H(+). It functions in the pathway cell wall biogenesis; peptidoglycan biosynthesis. In terms of biological role, cell wall formation. The chain is UDP-N-acetylenolpyruvoylglucosamine reductase from Nostoc sp. (strain PCC 7120 / SAG 25.82 / UTEX 2576).